Here is a 193-residue protein sequence, read N- to C-terminus: Ion-translocating oxidoreductase complex subunit A (193 aa).

The next 6 helical transmembrane spans lie at 5 to 25 (VLLL…FLGL), 39 to 59 (IGMS…SYLV), 63 to 83 (ILIP…VIAV), 102 to 122 (LLGI…VALL), 134 to 154 (AVYG…FAAL), and 171 to 191 (SIAL…TGLV).

This sequence belongs to the NqrDE/RnfAE family. As to quaternary structure, the complex is composed of six subunits: RnfA, RnfB, RnfC, RnfD, RnfE and RnfG.

Its subcellular location is the cell inner membrane. Part of a membrane-bound complex that couples electron transfer with translocation of ions across the membrane. This Pseudoalteromonas translucida (strain TAC 125) protein is Ion-translocating oxidoreductase complex subunit A.